Reading from the N-terminus, the 85-residue chain is MADDHPQDKAERERIFKRFDANGDGKISAAELGEALKTLGSITPDEVKHMMAEIDTDGDGFISFQEFTDFGRANRGLLKDVAKIF.

2 EF-hand domains span residues 7–42 (QDKAERERIFKRFDANGDGKISAAELGEALKTLGSI) and 42–77 (ITPDEVKHMMAEIDTDGDGFISFQEFTDFGRANRGL). 9 residues coordinate Ca(2+): aspartate 20, asparagine 22, aspartate 24, lysine 26, glutamate 31, aspartate 55, aspartate 57, aspartate 59, and glutamate 66.

As to quaternary structure, monomer.

The polypeptide is Polcalcin Bet v 4 (BETV4) (Betula pendula (European white birch)).